The sequence spans 180 residues: Adenine phosphoribosyltransferase (180 aa).

This sequence belongs to the purine/pyrimidine phosphoribosyltransferase family. As to quaternary structure, homodimer.

It is found in the cytoplasm. The enzyme catalyses AMP + diphosphate = 5-phospho-alpha-D-ribose 1-diphosphate + adenine. The protein operates within purine metabolism; AMP biosynthesis via salvage pathway; AMP from adenine: step 1/1. In terms of biological role, catalyzes a salvage reaction resulting in the formation of AMP, that is energically less costly than de novo synthesis. The protein is Adenine phosphoribosyltransferase of Rhizobium meliloti (strain 1021) (Ensifer meliloti).